The following is a 176-amino-acid chain: MILSNDELKKLISLGKLKVDPLYPDAVRENGLDLRIGGEYAIYAYEGAVVRPCDLDDAKPLFRVVKADEVVIPPRNFVLLTTEEYVKMPEDVAGLANLRSTLARYGLSIPPTVVDVGFEGNITIEVVNNSPNTIVLKRGMRFLHLVLIKAEGRAAYRGAYQGQRGVTPPKGLKGEC.

DCTP is bound by residues 99 to 104 (RSTLAR) and Asp115. The active-site Proton donor/acceptor is Glu125. Gln163 is a dCTP binding site.

The protein belongs to the dCTP deaminase family. Homotrimer.

The enzyme catalyses dCTP + H2O + H(+) = dUTP + NH4(+). It participates in pyrimidine metabolism; dUMP biosynthesis; dUMP from dCTP (dUTP route): step 1/2. Its function is as follows. Catalyzes the deamination of dCTP to dUTP. This is dCTP deaminase from Pyrobaculum calidifontis (strain DSM 21063 / JCM 11548 / VA1).